Consider the following 95-residue polypeptide: Aspartyl/glutamyl-tRNA(Asn/Gln) amidotransferase subunit C (95 aa).

This sequence belongs to the GatC family. As to quaternary structure, heterotrimer of A, B and C subunits.

The enzyme catalyses L-glutamyl-tRNA(Gln) + L-glutamine + ATP + H2O = L-glutaminyl-tRNA(Gln) + L-glutamate + ADP + phosphate + H(+). It carries out the reaction L-aspartyl-tRNA(Asn) + L-glutamine + ATP + H2O = L-asparaginyl-tRNA(Asn) + L-glutamate + ADP + phosphate + 2 H(+). Its function is as follows. Allows the formation of correctly charged Asn-tRNA(Asn) or Gln-tRNA(Gln) through the transamidation of misacylated Asp-tRNA(Asn) or Glu-tRNA(Gln) in organisms which lack either or both of asparaginyl-tRNA or glutaminyl-tRNA synthetases. The reaction takes place in the presence of glutamine and ATP through an activated phospho-Asp-tRNA(Asn) or phospho-Glu-tRNA(Gln). The polypeptide is Aspartyl/glutamyl-tRNA(Asn/Gln) amidotransferase subunit C (Clostridium botulinum (strain Loch Maree / Type A3)).